Reading from the N-terminus, the 577-residue chain is Arginine--tRNA ligase (577 aa).

The 'HIGH' region motif lies at 122 to 132 (PNVAKEMHVGH).

It belongs to the class-I aminoacyl-tRNA synthetase family. As to quaternary structure, monomer.

The protein resides in the cytoplasm. The enzyme catalyses tRNA(Arg) + L-arginine + ATP = L-arginyl-tRNA(Arg) + AMP + diphosphate. This Vibrio parahaemolyticus serotype O3:K6 (strain RIMD 2210633) protein is Arginine--tRNA ligase.